Here is a 388-residue protein sequence, read N- to C-terminus: Arginine biosynthesis bifunctional protein ArgJ (388 aa).

6 residues coordinate substrate: T150, K172, T183, E263, N383, and T388. Catalysis depends on T183, which acts as the Nucleophile.

This sequence belongs to the ArgJ family. In terms of assembly, heterotetramer of two alpha and two beta chains.

It localises to the cytoplasm. It catalyses the reaction N(2)-acetyl-L-ornithine + L-glutamate = N-acetyl-L-glutamate + L-ornithine. It carries out the reaction L-glutamate + acetyl-CoA = N-acetyl-L-glutamate + CoA + H(+). The protein operates within amino-acid biosynthesis; L-arginine biosynthesis; L-ornithine and N-acetyl-L-glutamate from L-glutamate and N(2)-acetyl-L-ornithine (cyclic): step 1/1. It participates in amino-acid biosynthesis; L-arginine biosynthesis; N(2)-acetyl-L-ornithine from L-glutamate: step 1/4. Its function is as follows. Catalyzes two activities which are involved in the cyclic version of arginine biosynthesis: the synthesis of N-acetylglutamate from glutamate and acetyl-CoA as the acetyl donor, and of ornithine by transacetylation between N(2)-acetylornithine and glutamate. In Corynebacterium efficiens (strain DSM 44549 / YS-314 / AJ 12310 / JCM 11189 / NBRC 100395), this protein is Arginine biosynthesis bifunctional protein ArgJ.